Consider the following 435-residue polypeptide: Minor fimbrial subunit HifE (435 aa).

The N-terminal stretch at methionine 1–alanine 31 is a signal peptide.

Belongs to the fimbrial protein family.

It localises to the fimbrium. Functionally, may be a minor structural protein required for pilus biogenesis. May be the adhesive component in the pili. The protein is Minor fimbrial subunit HifE (hifE) of Haemophilus influenzae.